The chain runs to 82 residues: Translational regulator CsrA (82 aa).

Belongs to the CsrA/RsmA family. Homodimer; the beta-strands of each monomer intercalate to form a hydrophobic core, while the alpha-helices form wings that extend away from the core.

The protein localises to the cytoplasm. A translational regulator that binds mRNA to regulate translation initiation and/or mRNA stability. Usually binds in the 5'-UTR at or near the Shine-Dalgarno sequence preventing ribosome-binding, thus repressing translation. Its main target seems to be the major flagellin gene, while its function is anatagonized by FliW. The polypeptide is Translational regulator CsrA (Geobacillus kaustophilus (strain HTA426)).